The chain runs to 470 residues: 6-phosphofructo-2-kinase/fructose-2,6-bisphosphatase (470 aa).

The 6-phosphofructo-2-kinase stretch occupies residues 1–249 (MAAVASGQLT…VYYLMNTHVT (249 aa)). S31 carries the phosphoserine; by PKA modification. ATP is bound at residue 47–55 (GLRRPGKTY). Beta-D-fructose 6-phosphate is bound by residues R80 and R104. The active site involves D130. Positions 132 and 138 each coordinate beta-D-fructose 6-phosphate. The active site involves C160. ATP is bound at residue 169–174 (NIKQVK). The beta-D-fructose 6-phosphate site is built by K174, R195, and Y199. Residues 250–469 (PRAIYLSRHG…AEALVTVPEH (220 aa)) form a fructose-2,6-bisphosphatase region. Position 257 (R257) interacts with beta-D-fructose 2,6-bisphosphate. The active-site Tele-phosphohistidine intermediate is the H258. Beta-D-fructose 2,6-bisphosphate-binding residues include N264 and G270. E327 acts as the Proton donor/acceptor in catalysis. 6 residues coordinate beta-D-fructose 2,6-bisphosphate: Y338, R352, K356, Y367, Q393, and R397. 349–352 (FALR) lines the ATP pocket. ATP contacts are provided by residues 393–397 (QAVMR) and Y429.

It in the C-terminal section; belongs to the phosphoglycerate mutase family. As to quaternary structure, homodimer. Liver.

It carries out the reaction beta-D-fructose 2,6-bisphosphate + H2O = beta-D-fructose 6-phosphate + phosphate. The enzyme catalyses beta-D-fructose 6-phosphate + ATP = beta-D-fructose 2,6-bisphosphate + ADP + H(+). With respect to regulation, phosphorylation results in inhibition of the kinase activity. Its function is as follows. Synthesis and degradation of fructose 2,6-bisphosphate. This chain is 6-phosphofructo-2-kinase/fructose-2,6-bisphosphatase, found in Gallus gallus (Chicken).